A 267-amino-acid polypeptide reads, in one-letter code: HTH-type transcriptional activator CsvR (267 aa).

DNA-binding regions (H-T-H motif) lie at residues 183–204 and 230–253; these read AIIA…ESED and ISQI…NKHF.

As to quaternary structure, homodimer.

In terms of biological role, transcriptional activator of fimbrial genes in enterotoxigenic E.coli. The protein is HTH-type transcriptional activator CsvR of Escherichia coli.